The primary structure comprises 309 residues: Homoserine O-succinyltransferase (309 aa).

Cys-142 acts as the Acyl-thioester intermediate in catalysis. Lys-163 and Ser-192 together coordinate substrate. His-235 acts as the Proton acceptor in catalysis. Glu-237 is an active-site residue. Residue Arg-249 participates in substrate binding.

This sequence belongs to the MetA family. As to quaternary structure, homodimer.

It is found in the cytoplasm. The enzyme catalyses L-homoserine + succinyl-CoA = O-succinyl-L-homoserine + CoA. It participates in amino-acid biosynthesis; L-methionine biosynthesis via de novo pathway; O-succinyl-L-homoserine from L-homoserine: step 1/1. Its function is as follows. Transfers a succinyl group from succinyl-CoA to L-homoserine, forming succinyl-L-homoserine. The protein is Homoserine O-succinyltransferase of Salmonella choleraesuis (strain SC-B67).